Consider the following 132-residue polypeptide: Small ribosomal subunit protein uS8c (132 aa).

Belongs to the universal ribosomal protein uS8 family. As to quaternary structure, part of the 30S ribosomal subunit.

The protein localises to the plastid. It is found in the chloroplast. In terms of biological role, one of the primary rRNA binding proteins, it binds directly to 16S rRNA central domain where it helps coordinate assembly of the platform of the 30S subunit. The sequence is that of Small ribosomal subunit protein uS8c (rps8) from Liriodendron tulipifera (Tuliptree).